A 132-amino-acid chain; its full sequence is Galectin-2 (132 aa).

In terms of domain architecture, Galectin spans 4–131 (ELEVKNMDMK…GFNMSSFKLK (128 aa)). Position 65–71 (65–71 (WGQEQRE)) interacts with a beta-D-galactoside.

As to quaternary structure, homodimer.

Its function is as follows. This protein binds beta-galactoside. Its physiological function is not yet known. The protein is Galectin-2 (LGALS2) of Homo sapiens (Human).